Consider the following 550-residue polypeptide: MTRYIFITGGVVSSLGKGLASAALGALLQARGYKVRLRKLDPYLNVDPGTMSPYQHGEVFVTDDGAETDLDLGHYERFTGVSATKADNITTGQIYKTIIEKERRGDYLGATVQVIPHVTNEIKDFVLSPAMDETGEKAVDFVLVEIGGTVGDIEGLPFFEAIRQLRQDLPRGQSCYVHLTLLPFIKTAGEMKTKPTQHSVKELRSIGIQPDILLCRCEQEIPPEEKRKIAQFCNVRPSAVIQAMDSSSIYAVPIDYHEQGLDAEVLDVFGMRDAPAPDLTRWKTIDDTVQHPDGEVTIAVVGKYTVLKDAYKSLIEALHHGGLANKVKVNLDWVESETFEGDEGAAAARLENAHAIMVPGGFGERGAEGKIRAAQFARERKVPYFGICFGMQMAVIETLRNVAGIKDASSSEFGPTERPVVGIMTEWIKGNETVQRRANDDLGGTMRLGAYDAVLTAGSKIAEIYGATEISERHRHRYEVNIGYVHLMEDAGLKLTGRSPNGVLPEIVERDDHPWFIGVQYHPELKSRPFAPHPLFASFIAAAKEHGRLV.

The tract at residues 1–271 is amidoligase domain; that stretch reads MTRYIFITGG…DAEVLDVFGM (271 aa). S13 is a CTP binding site. S13 is a binding site for UTP. An ATP-binding site is contributed by 14-19; it reads SLGKGL. Y54 contributes to the L-glutamine binding site. ATP is bound at residue D71. The Mg(2+) site is built by D71 and E145. CTP is bound by residues 152-154, 192-197, and K228; these read DIE and KTKPTQ. UTP-binding positions include 192–197 and K228; that span reads KTKPTQ. In terms of domain architecture, Glutamine amidotransferase type-1 spans 297-549; that stretch reads TIAVVGKYTV…IAAAKEHGRL (253 aa). G361 provides a ligand contact to L-glutamine. The active-site Nucleophile; for glutamine hydrolysis is the C388. Residues 389 to 392, E412, and R477 each bind L-glutamine; that span reads FGMQ. Catalysis depends on residues H522 and E524.

This sequence belongs to the CTP synthase family. As to quaternary structure, homotetramer.

It catalyses the reaction UTP + L-glutamine + ATP + H2O = CTP + L-glutamate + ADP + phosphate + 2 H(+). It carries out the reaction L-glutamine + H2O = L-glutamate + NH4(+). The catalysed reaction is UTP + NH4(+) + ATP = CTP + ADP + phosphate + 2 H(+). Its pathway is pyrimidine metabolism; CTP biosynthesis via de novo pathway; CTP from UDP: step 2/2. Allosterically activated by GTP, when glutamine is the substrate; GTP has no effect on the reaction when ammonia is the substrate. The allosteric effector GTP functions by stabilizing the protein conformation that binds the tetrahedral intermediate(s) formed during glutamine hydrolysis. Inhibited by the product CTP, via allosteric rather than competitive inhibition. Functionally, catalyzes the ATP-dependent amination of UTP to CTP with either L-glutamine or ammonia as the source of nitrogen. Regulates intracellular CTP levels through interactions with the four ribonucleotide triphosphates. The polypeptide is CTP synthase (Caulobacter vibrioides (strain ATCC 19089 / CIP 103742 / CB 15) (Caulobacter crescentus)).